A 152-amino-acid polypeptide reads, in one-letter code: Natriuretic peptides A (152 aa).

The N-terminal stretch at 1-24 is a signal peptide; the sequence is MGSFSITKGFFLFLAFWLPGHIGA. 2 propeptides span residues 25–122 and 92–102; these read NPVY…AGPR and DGGALGRGPWD. Residues 54-104 form a disordered region; sequence DEVMPPQALSEQTDEAGAALSSLSEVPPWTGEVNPSQRDGGALGRGPWDPS. The residue at position 128 (S128) is a Phosphoserine. Residues C129 and C145 are joined by a disulfide bond. Residues 146-150 are important for degradation of atrial natriuretic peptide by IDE; that stretch reads NSFRY.

It belongs to the natriuretic peptide family. In terms of assembly, homodimer; disulfide-linked antiparallel dimer. Post-translationally, the precursor molecule is proteolytically cleaved by CORIN at Arg-122 to produce the atrial natriuretic peptide. Undergoes further proteolytic cleavage by unknown proteases to give rise to long-acting natriuretic peptide, vessel dilator and kaliuretic peptide. Additional processing gives rise to the auriculin and atriopeptin peptides. In the kidneys, alternative processing by an unknown protease results in the peptide urodilatin. In terms of processing, cleavage by MME initiates degradation of the factor and thereby regulates its activity. Degradation by IDE results in reduced activation of NPR1 (in vitro). During IDE degradation, the resulting products can temporarily stimulate NPR2 to produce cGMP, before the fragments are completely degraded and inactivated by IDE (in vitro). Degraded by IDE. Post-translationally, phosphorylation on Ser-128 decreases vasorelaxant activity. High levels of expression in the atria compared to the ventricles. Very low levels of expression detected in extracardiac tissues such as the brain, hypothalamus, pituitary, lung and aorta. As to expression, atria (at protein level). In terms of tissue distribution, high levels of expression in the atria with very low levels of expression in the ventricles (at protein level). Relatively low levels of expression detected in the brain compared to the atria (at protein level).

The protein localises to the secreted. The protein resides in the perikaryon. Its subcellular location is the cell projection. Hormone that plays a key role in mediating cardio-renal homeostasis, and is involved in vascular remodeling and regulating energy metabolism. Acts by specifically binding and stimulating NPR1 to produce cGMP, which in turn activates effector proteins, such as PRKG1, that drive various biological responses. Regulates vasodilation, natriuresis, diuresis and aldosterone synthesis and is therefore essential for regulating blood pressure, controlling the extracellular fluid volume and maintaining the fluid-electrolyte balance. Also involved in inhibiting cardiac remodeling and cardiac hypertrophy by inducing cardiomyocyte apoptosis and attenuating the growth of cardiomyocytes and fibroblasts. Plays a role in female pregnancy by promoting trophoblast invasion and spiral artery remodeling in uterus, and thus prevents pregnancy-induced hypertension. In adipose tissue, acts in various cGMP- and PKG-dependent pathways to regulate lipid metabolism and energy homeostasis. This includes up-regulating lipid metabolism and mitochondrial oxygen utilization by activating the AMP-activated protein kinase (AMPK), and increasing energy expenditure by acting via MAPK11 to promote the UCP1-dependent thermogenesis of brown adipose tissue. Binds the clearance receptor NPR3 which removes the hormone from circulation. Its function is as follows. May have a role in cardio-renal homeostasis through regulation of natriuresis, diuresis, vasodilation, and inhibiting aldosterone synthesis. In vitro, promotes the production of cGMP and induces vasodilation. May promote natriuresis, at least in part, by enhancing prostaglandin E2 synthesis resulting in the inhibition of renal Na+-K+-ATPase. However reports on the involvement of this peptide in mammal blood volume and blood pressure homeostasis are conflicting; according to a report, in vivo it is not sufficient to activate cGMP and does not inhibit collecting duct transport nor effect diuresis and natriuresis. Appears to bind to specific receptors that are distinct from the receptors bound by atrial natriuretic peptide and vessel dilator. Possibly enhances protein excretion in urine by decreasing proximal tubular protein reabsorption. Functionally, may have a role in cardio-renal homeostasis through regulation of natriuresis, diuresis, and vasodilation. In vitro, promotes the production of cGMP and induces vasodilation. May promote natriuresis, at least in part, by enhancing prostaglandin E2 synthesis resulting in the inhibition of renal Na+-K+-ATPase. However reports on the involvement of this peptide in mammal blood volume and blood pressure homeostasis are conflicting; according to a report, in vivo it is not sufficient to activate cGMP and does not inhibit collecting duct transport nor effect diuresis and natriuresis. Appears to bind to specific receptors that are distinct from the receptors bound by the atrial natriuretic and long-acting natriuretic peptides. Possibly functions in protein excretion in urine by maintaining the integrity of the proximal tubules and enhancing protein excretion by decreasing proximal tubular protein reabsorption. In terms of biological role, may have a role in cardio-renal homeostasis through regulation of diuresis and inhibiting aldosterone synthesis. In vitro, promotes the production of cGMP and induces vasodilation. May promote natriuresis, at least in part, by enhancing prostaglandin E2 synthesis resulting in the inhibition of renal Na+-K+-ATPase. May have a role in potassium excretion but not sodium excretion (natriuresis). Possibly enhances protein excretion in urine by decreasing proximal tubular protein reabsorption. Hormone produced in the kidneys that appears to be important for maintaining cardio-renal homeostasis. Mediates vasodilation, natriuresis and diuresis primarily in the renal system, in order to maintain the extracellular fluid volume and control the fluid-electrolyte balance. Specifically binds and stimulates cGMP production by renal transmembrane receptors, likely NPR1. Urodilatin not ANP, may be the natriuretic peptide responsible for the regulation of sodium and water homeostasis in the kidney. Its function is as follows. May have a role in cardio-renal homeostasis through regulation of natriuresis and vasodilation. In vivo promotes natriuresis and in vitro, vasodilates renal artery strips. Functionally, may have a role in cardio-renal homeostasis through regulation of regulation of natriuresis and vasodilation. In vivo promotes natriuresis. In vitro, vasodilates intestinal smooth muscle but not smooth muscle strips. In terms of biological role, may have a role in cardio-renal homeostasis through regulation of natriuresis and vasodilation. In vivo promotes natriuresis. In vitro, selectively vasodilates intestinal and vascular smooth muscle strips. May have a role in cardio-renal homeostasis through regulation of natriuresis and vasodilation. In vivo promotes natriuresis. In vitro, selectively vasodilates intestinal smooth muscle but not vascular smooth muscle strips. The polypeptide is Natriuretic peptides A (Nppa) (Rattus norvegicus (Rat)).